Here is a 1892-residue protein sequence, read N- to C-terminus: Kinesin-like protein KIN-12E (1892 aa).

Residues methionine 1–asparagine 28 are disordered. The Kinesin motor domain maps to asparagine 64–isoleucine 401. Glycine 145 to threonine 152 lines the ATP pocket. Coiled coils occupy residues lysine 406–methionine 438, serine 486–lysine 526, leucine 1066–glutamine 1139, lysine 1303–asparagine 1357, and isoleucine 1396–isoleucine 1528. Residues leucine 1633–serine 1649 are compositionally biased toward basic and acidic residues. Positions leucine 1633–glycine 1656 are disordered. A coiled-coil region spans residues methionine 1780–glutamate 1841. A disordered region spans residues histidine 1870–glutamine 1892.

Belongs to the TRAFAC class myosin-kinesin ATPase superfamily. Kinesin family. KIN-12 subfamily.

This Oryza sativa subsp. japonica (Rice) protein is Kinesin-like protein KIN-12E.